A 530-amino-acid polypeptide reads, in one-letter code: Fusaric acid resistance protein FusA (530 aa).

Positions 1-23 are cleaved as a signal peptide; that stretch reads MQSPATKGTLALAVLAVSLIMAG. Residue cysteine 24 is the site of N-palmitoyl cysteine attachment. Cysteine 24 carries S-diacylglycerol cysteine lipidation. Disordered regions lie at residues 375–442 and 476–530; these read NAGV…RQRA and GVET…PAAR. Low complexity-rich tracts occupy residues 421–430 and 494–530; these read RPQLPAVARR and AAGA…PAAR.

The protein belongs to the outer membrane factor (OMF) (TC 1.B.17) family.

Its subcellular location is the cell membrane. Its function is as follows. Involved in the resistance (detoxification) of the fungal toxin fusaric acid. This is Fusaric acid resistance protein FusA (fusA) from Burkholderia cepacia (Pseudomonas cepacia).